A 473-amino-acid polypeptide reads, in one-letter code: MKLSMPRFDQAPVLVVGDVMLDRYWHGGTSRISPEAPVPVVKVDQIEDRPGGAANVALNIAALGAPASLVGVTGQDEAADSLANSLQAAGVRSIFQRIAHQPTIVKLRVMSRHQQLLRIDFEEPFATDPLSLGEEVEGLLEGVKVLVLSDYGKGALRNHQALIQAARQKQIPVLADPKGKDFSIYRGASLITPNLSEFEAIVGRCADEAELVAKGLKLLEELDLGALLVTRGEHGMTLLRVGHPALHLPARAREVFDVTGAGDTVISTLAAAIAAGEDLPHAVALANLAAGIVVGKLGTAAISAPELRRAIQREEGSERGVLSLEQLLLAIDDARAHNETIVFTNGCFDILHAGHVTYLEQARAQGDRLIVAINDDASVSRLKGPGRPINSVDRRMAVLAGLGAVDWVISFPEATPENLLRQVKPDVLVKGGDYGIDQVVGADIVKAYGGTVKVLGLVENSSTTAIVEKIRKH.

The tract at residues 1 to 318 is ribokinase; that stretch reads MKLSMPRFDQ…RAIQREEGSE (318 aa). 194-197 contributes to the ATP binding site; the sequence is NLSE. The active site involves D263. The tract at residues 343–473 is cytidylyltransferase; it reads FTNGCFDILH…TAIVEKIRKH (131 aa).

The protein in the N-terminal section; belongs to the carbohydrate kinase PfkB family. This sequence in the C-terminal section; belongs to the cytidylyltransferase family. In terms of assembly, homodimer.

The enzyme catalyses D-glycero-beta-D-manno-heptose 7-phosphate + ATP = D-glycero-beta-D-manno-heptose 1,7-bisphosphate + ADP + H(+). The catalysed reaction is D-glycero-beta-D-manno-heptose 1-phosphate + ATP + H(+) = ADP-D-glycero-beta-D-manno-heptose + diphosphate. It functions in the pathway nucleotide-sugar biosynthesis; ADP-L-glycero-beta-D-manno-heptose biosynthesis; ADP-L-glycero-beta-D-manno-heptose from D-glycero-beta-D-manno-heptose 7-phosphate: step 1/4. It participates in nucleotide-sugar biosynthesis; ADP-L-glycero-beta-D-manno-heptose biosynthesis; ADP-L-glycero-beta-D-manno-heptose from D-glycero-beta-D-manno-heptose 7-phosphate: step 3/4. In terms of biological role, catalyzes the phosphorylation of D-glycero-D-manno-heptose 7-phosphate at the C-1 position to selectively form D-glycero-beta-D-manno-heptose-1,7-bisphosphate. Its function is as follows. Catalyzes the ADP transfer from ATP to D-glycero-beta-D-manno-heptose 1-phosphate, yielding ADP-D-glycero-beta-D-manno-heptose. This Pseudomonas entomophila (strain L48) protein is Bifunctional protein HldE.